Reading from the N-terminus, the 235-residue chain is 2-C-methyl-D-erythritol 4-phosphate cytidylyltransferase (235 aa).

This sequence belongs to the IspD/TarI cytidylyltransferase family. IspD subfamily.

It carries out the reaction 2-C-methyl-D-erythritol 4-phosphate + CTP + H(+) = 4-CDP-2-C-methyl-D-erythritol + diphosphate. Its pathway is isoprenoid biosynthesis; isopentenyl diphosphate biosynthesis via DXP pathway; isopentenyl diphosphate from 1-deoxy-D-xylulose 5-phosphate: step 2/6. Catalyzes the formation of 4-diphosphocytidyl-2-C-methyl-D-erythritol from CTP and 2-C-methyl-D-erythritol 4-phosphate (MEP). This is 2-C-methyl-D-erythritol 4-phosphate cytidylyltransferase from Ectopseudomonas mendocina (strain ymp) (Pseudomonas mendocina).